Consider the following 39-residue polypeptide: MAGTGRIPLWLVATVGGIAAITVLGIFIYGSYSGVGSSL.

Residues 9–29 form a helical membrane-spanning segment; sequence LWLVATVGGIAAITVLGIFIY.

This sequence belongs to the PsbJ family. As to quaternary structure, PSII is composed of 1 copy each of membrane proteins PsbA, PsbB, PsbC, PsbD, PsbE, PsbF, PsbH, PsbI, PsbJ, PsbK, PsbL, PsbM, PsbT, PsbX, PsbY, PsbZ, Psb30/Ycf12, at least 3 peripheral proteins of the oxygen-evolving complex and a large number of cofactors. It forms dimeric complexes.

Its subcellular location is the plastid. The protein resides in the chloroplast thylakoid membrane. One of the components of the core complex of photosystem II (PSII). PSII is a light-driven water:plastoquinone oxidoreductase that uses light energy to abstract electrons from H(2)O, generating O(2) and a proton gradient subsequently used for ATP formation. It consists of a core antenna complex that captures photons, and an electron transfer chain that converts photonic excitation into a charge separation. This is Photosystem II reaction center protein J from Pyropia yezoensis (Susabi-nori).